Reading from the N-terminus, the 586-residue chain is CTP synthase 2 (586 aa).

Residues 300–554 form the Glutamine amidotransferase type-1 domain; it reads SIALVGKYTK…LAATGNLNAY (255 aa). Residues Cys-399, His-526, and Glu-528 each act as for GATase activity in the active site. The segment at 564 to 586 is disordered; the sequence is SDRYSDASDDSFSEPRLAELEIS. Residues Ser-568, Ser-571, and Ser-574 each carry the phosphoserine modification.

Belongs to the CTP synthase family.

It carries out the reaction UTP + L-glutamine + ATP + H2O = CTP + L-glutamate + ADP + phosphate + 2 H(+). It participates in pyrimidine metabolism; CTP biosynthesis via de novo pathway; CTP from UDP: step 2/2. Catalyzes the ATP-dependent amination of UTP to CTP with either L-glutamine or ammonia as the source of nitrogen. Constitutes the rate-limiting enzyme in the synthesis of cytosine nucleotides. The sequence is that of CTP synthase 2 (CTPS2) from Bos taurus (Bovine).